We begin with the raw amino-acid sequence, 352 residues long: Spermidine/putrescine import ATP-binding protein PotA (352 aa).

Residues 7–237 (IRLENVTKSF…PVNAFVADFI (231 aa)) enclose the ABC transporter domain. 39 to 46 (GPSGCGKT) contacts ATP.

This sequence belongs to the ABC transporter superfamily. Spermidine/putrescine importer (TC 3.A.1.11.1) family. The complex is composed of two ATP-binding proteins (PotA), two transmembrane proteins (PotB and PotC) and a solute-binding protein (PotD).

It is found in the cell membrane. The catalysed reaction is ATP + H2O + polyamine-[polyamine-binding protein]Side 1 = ADP + phosphate + polyamineSide 2 + [polyamine-binding protein]Side 1.. Part of the ABC transporter complex PotABCD involved in spermidine/putrescine import. Responsible for energy coupling to the transport system. This chain is Spermidine/putrescine import ATP-binding protein PotA, found in Acetivibrio thermocellus (strain ATCC 27405 / DSM 1237 / JCM 9322 / NBRC 103400 / NCIMB 10682 / NRRL B-4536 / VPI 7372) (Clostridium thermocellum).